A 212-amino-acid chain; its full sequence is Thymidylate kinase (212 aa).

10–17 (GPEGAGKT) lines the ATP pocket.

The protein belongs to the thymidylate kinase family.

The catalysed reaction is dTMP + ATP = dTDP + ADP. Its function is as follows. Phosphorylation of dTMP to form dTDP in both de novo and salvage pathways of dTTP synthesis. This is Thymidylate kinase from Bacillus licheniformis (strain ATCC 14580 / DSM 13 / JCM 2505 / CCUG 7422 / NBRC 12200 / NCIMB 9375 / NCTC 10341 / NRRL NRS-1264 / Gibson 46).